The primary structure comprises 87 residues: Phytosulfokines 1 (87 aa).

A signal peptide spans M1–S24. A propeptide spanning residues V25–D76 is cleaved from the precursor. The disordered stretch occupies residues G31–S59. The segment covering T41–S59 has biased composition (basic and acidic residues). Sulfotyrosine is present on residues Y77 and Y79. A propeptide spanning residues D82–P87 is cleaved from the precursor.

Belongs to the phytosulfokine family. In terms of processing, sulfation is important for activity and for the binding to a putative membrane receptor. Post-translationally, PSK-beta is produced from PSK-alpha by exopeptidase digestion. As to expression, expressed only in roots.

The protein localises to the secreted. Functionally, promotes plant cell differentiation, organogenesis and somatic embryogenesis as well as cell proliferation. The polypeptide is Phytosulfokines 1 (PSK1) (Arabidopsis thaliana (Mouse-ear cress)).